The sequence spans 235 residues: Type III pantothenate kinase (235 aa).

6–13 (DVGNNYIK) is an ATP binding site. Residues tyrosine 81 and 88-91 (GTDR) each bind substrate. The active-site Proton acceptor is aspartate 90. A K(+)-binding site is contributed by aspartate 111. Residue threonine 114 coordinates ATP. Substrate is bound at residue threonine 166.

This sequence belongs to the type III pantothenate kinase family. As to quaternary structure, homodimer. The cofactor is NH4(+). K(+) is required as a cofactor.

The protein resides in the cytoplasm. It catalyses the reaction (R)-pantothenate + ATP = (R)-4'-phosphopantothenate + ADP + H(+). Its pathway is cofactor biosynthesis; coenzyme A biosynthesis; CoA from (R)-pantothenate: step 1/5. Catalyzes the phosphorylation of pantothenate (Pan), the first step in CoA biosynthesis. The chain is Type III pantothenate kinase from Cytophaga hutchinsonii (strain ATCC 33406 / DSM 1761 / CIP 103989 / NBRC 15051 / NCIMB 9469 / D465).